The following is a 204-amino-acid chain: Inner membrane-spanning protein YciB (204 aa).

The next 5 membrane-spanning stretches (helical) occupy residues 48–68 (ILFA…LYFF), 73–93 (FESM…ATLM), 102–122 (WKPT…QLFT), 147–167 (GAWI…AYAF), and 170–190 (AVWV…FVVG).

This sequence belongs to the YciB family.

Its subcellular location is the cell inner membrane. Its function is as follows. Plays a role in cell envelope biogenesis, maintenance of cell envelope integrity and membrane homeostasis. This chain is Inner membrane-spanning protein YciB, found in Nitrosococcus oceani (strain ATCC 19707 / BCRC 17464 / JCM 30415 / NCIMB 11848 / C-107).